A 464-amino-acid polypeptide reads, in one-letter code: Endo-1,4-beta-xylanase A (464 aa).

A signal peptide spans 1–33 (MFRHHPTRGRRTAGLLAAALATLSAGLTAVAPA). Residues 40-349 (TATLGELAEA…KPAYHAIAAA (310 aa)) enclose the GH10 domain. The active-site Proton donor is Glu166. The Nucleophile role is filled by Glu271. Positions 354–457 (SPAPGGNCTA…TPADVTCTPG (104 aa)) constitute a CBM2 domain.

This sequence belongs to the glycosyl hydrolase 10 (cellulase F) family. It depends on Does not require any standard metal (Mg(2+), Mn2(+), Ca(2+)). as a cofactor.

The catalysed reaction is Endohydrolysis of (1-&gt;4)-beta-D-xylosidic linkages in xylans.. The protein operates within glycan degradation; xylan degradation. With respect to regulation, completely inhibited by Hg(2+), unaffected by EDTA. Its function is as follows. Contributes to hydrolysis of hemicellulose, the major component of plant cell-walls. Hydrolyzes xylan to xylose and xylobiose. The chain is Endo-1,4-beta-xylanase A (xynAS9) from Streptomyces sp.